A 251-amino-acid chain; its full sequence is 1-(5-phosphoribosyl)-5-[(5-phosphoribosylamino)methylideneamino] imidazole-4-carboxamide isomerase (251 aa).

Residue D8 is the Proton acceptor of the active site. D129 serves as the catalytic Proton donor.

This sequence belongs to the HisA/HisF family.

It is found in the cytoplasm. The catalysed reaction is 1-(5-phospho-beta-D-ribosyl)-5-[(5-phospho-beta-D-ribosylamino)methylideneamino]imidazole-4-carboxamide = 5-[(5-phospho-1-deoxy-D-ribulos-1-ylimino)methylamino]-1-(5-phospho-beta-D-ribosyl)imidazole-4-carboxamide. Its pathway is amino-acid biosynthesis; L-histidine biosynthesis; L-histidine from 5-phospho-alpha-D-ribose 1-diphosphate: step 4/9. This is 1-(5-phosphoribosyl)-5-[(5-phosphoribosylamino)methylideneamino] imidazole-4-carboxamide isomerase from Desulfosudis oleivorans (strain DSM 6200 / JCM 39069 / Hxd3) (Desulfococcus oleovorans).